We begin with the raw amino-acid sequence, 313 residues long: Ribosomal RNA small subunit methyltransferase H (313 aa).

Residues 35 to 37 (GGH), Asp55, Phe80, Asp102, and Gln109 contribute to the S-adenosyl-L-methionine site.

This sequence belongs to the methyltransferase superfamily. RsmH family.

The protein localises to the cytoplasm. The catalysed reaction is cytidine(1402) in 16S rRNA + S-adenosyl-L-methionine = N(4)-methylcytidine(1402) in 16S rRNA + S-adenosyl-L-homocysteine + H(+). Specifically methylates the N4 position of cytidine in position 1402 (C1402) of 16S rRNA. In Shewanella sp. (strain MR-4), this protein is Ribosomal RNA small subunit methyltransferase H.